Reading from the N-terminus, the 42-residue chain is MSNTGTTGRIPLWLVGTVAGTAALTLVAVFFYGSYVGLGSSL.

A helical membrane pass occupies residues 10-30 (IPLWLVGTVAGTAALTLVAVF).

Belongs to the PsbJ family. PSII is composed of 1 copy each of membrane proteins PsbA, PsbB, PsbC, PsbD, PsbE, PsbF, PsbH, PsbI, PsbJ, PsbK, PsbL, PsbM, PsbT, PsbX, PsbY, PsbZ, Psb30/Ycf12, at least 3 peripheral proteins of the oxygen-evolving complex and a large number of cofactors. It forms dimeric complexes.

It is found in the plastid. It localises to the chloroplast thylakoid membrane. One of the components of the core complex of photosystem II (PSII). PSII is a light-driven water:plastoquinone oxidoreductase that uses light energy to abstract electrons from H(2)O, generating O(2) and a proton gradient subsequently used for ATP formation. It consists of a core antenna complex that captures photons, and an electron transfer chain that converts photonic excitation into a charge separation. The sequence is that of Photosystem II reaction center protein J from Chlorella vulgaris (Green alga).